Consider the following 149-residue polypeptide: 3-hydroxyacyl-[acyl-carrier-protein] dehydratase FabZ (149 aa).

The active site involves H49.

Belongs to the thioester dehydratase family. FabZ subfamily.

The protein resides in the cytoplasm. It catalyses the reaction a (3R)-hydroxyacyl-[ACP] = a (2E)-enoyl-[ACP] + H2O. Its function is as follows. Involved in unsaturated fatty acids biosynthesis. Catalyzes the dehydration of short chain beta-hydroxyacyl-ACPs and long chain saturated and unsaturated beta-hydroxyacyl-ACPs. This chain is 3-hydroxyacyl-[acyl-carrier-protein] dehydratase FabZ, found in Sulfurimonas denitrificans (strain ATCC 33889 / DSM 1251) (Thiomicrospira denitrificans (strain ATCC 33889 / DSM 1251)).